We begin with the raw amino-acid sequence, 257 residues long: MTLAVRVIPCLDVDAGRVVKGVNFENLRDAGDPVELAAAYDAQGADELTFLDVTASTSDRGTMLDVVSRTAEQVFIPLTVGGGVRTVADVDRLLRAGADKVSVNTAAIARPELLKELSERFGSQCIVLSVDARTVPQGQPDTPSGWEVTTHGGKRGTGIDAVEWAERGAELGVGEILLNSMDADGTKAGFDLLMIRAVRAAVHVPVIASGGAGLVEHFAPAVEAGADAVLAASVFHFGDLSIPEVKDAMRAEGIVVR.

Catalysis depends on residues Asp-12 and Asp-131.

Belongs to the HisA/HisF family. As to quaternary structure, heterodimer of HisH and HisF.

Its subcellular location is the cytoplasm. The catalysed reaction is 5-[(5-phospho-1-deoxy-D-ribulos-1-ylimino)methylamino]-1-(5-phospho-beta-D-ribosyl)imidazole-4-carboxamide + L-glutamine = D-erythro-1-(imidazol-4-yl)glycerol 3-phosphate + 5-amino-1-(5-phospho-beta-D-ribosyl)imidazole-4-carboxamide + L-glutamate + H(+). Its pathway is amino-acid biosynthesis; L-histidine biosynthesis; L-histidine from 5-phospho-alpha-D-ribose 1-diphosphate: step 5/9. In terms of biological role, IGPS catalyzes the conversion of PRFAR and glutamine to IGP, AICAR and glutamate. The HisF subunit catalyzes the cyclization activity that produces IGP and AICAR from PRFAR using the ammonia provided by the HisH subunit. The chain is Imidazole glycerol phosphate synthase subunit HisF from Rhodococcus erythropolis (strain PR4 / NBRC 100887).